A 499-amino-acid polypeptide reads, in one-letter code: Protein adenylyltransferase Fic (499 aa).

The chain crosses the membrane as a helical span at residues 38–58 (FHYFVIFASGSLFSGLMFGLL). TPR repeat units lie at residues 126–159 (ALSSLKVAIEMKTMGKDDKAARLFQHALALSPKH) and 160–194 (PEILTKYGEFLEHNQQDVVRADHYYYQALTVNPSH). Positions 251 to 256 (SVGIEG) match the Inhibitory (S/T)XXXE(G/N) motif motif. ATP-binding positions include Glu-255 and 337–340 (VGGH). In terms of domain architecture, Fido spans 306–441 (ITLKDILEIH…IRPFVRFIAD (136 aa)). The active site involves His-384. ATP-binding positions include 388 to 395 (DGNGRTSR), 420 to 421 (YY), and Asn-428.

This sequence belongs to the fic family. As to quaternary structure, homodimer.

The protein resides in the membrane. It carries out the reaction L-tyrosyl-[protein] + ATP = O-(5'-adenylyl)-L-tyrosyl-[protein] + diphosphate. The catalysed reaction is L-threonyl-[protein] + ATP = 3-O-(5'-adenylyl)-L-threonyl-[protein] + diphosphate. It catalyses the reaction 3-O-(5'-adenylyl)-L-threonyl-[protein] + H2O = L-threonyl-[protein] + AMP + H(+). Its activity is regulated as follows. The side chain of Glu-255 determines which of the two opposing activities (AMPylase or de-AMPylase) will take place. In response to endoplasmic reticulum stress, mediates de-AMPylase activity. Adenylyltransferase activity is inhibited by the inhibitory helix present at the N-terminus: Glu-255 binds ATP and competes with ATP-binding at Arg-395, thereby preventing adenylyltransferase activity. In unstressed cells, disengagement of Glu-255 promotes adenylyltransferase activity. Activation dissociates ATP-binding from Glu-255, allowing ordered binding of the entire ATP moiety with the alpha-phosphate in an orientation that is productive for accepting an incoming target hydroxyl side chain. Its function is as follows. Protein that can both mediate the addition of adenosine 5'-monophosphate (AMP) to specific residues of target proteins (AMPylation), and the removal of the same modification from target proteins (de-AMPylation), depending on the context. The side chain of Glu-255 determines which of the two opposing activities (AMPylase or de-AMPylase) will take place. Acts as a key regulator of the unfolded protein response (UPR) by mediating AMPylation or de-AMPylation of Hsc70-3/BiP. In unstressed cells, acts as an adenylyltransferase by mediating AMPylation of Hsc70-3/BiP at 'Thr-518', thereby inactivating it. In response to endoplasmic reticulum stress, acts as a phosphodiesterase by mediating removal of ATP (de-AMPylation) from Hsc70-3/BiP at 'Thr-518', leading to restore HSPA5/BiP activity. The protein is Protein adenylyltransferase Fic of Aedes aegypti (Yellowfever mosquito).